The primary structure comprises 359 residues: Protein-glutamate methylesterase/protein-glutamine glutaminase 1 (359 aa).

The 118-residue stretch at Ser-4–Glu-121 folds into the Response regulatory domain. A 4-aspartylphosphate modification is found at Asp-55. Residues Tyr-169–Leu-354 form the CheB-type methylesterase domain. Catalysis depends on residues Ser-181, His-207, and Asp-303.

Belongs to the CheB family. In terms of processing, phosphorylated by CheA. Phosphorylation of the N-terminal regulatory domain activates the methylesterase activity.

The protein localises to the cytoplasm. It carries out the reaction [protein]-L-glutamate 5-O-methyl ester + H2O = L-glutamyl-[protein] + methanol + H(+). The catalysed reaction is L-glutaminyl-[protein] + H2O = L-glutamyl-[protein] + NH4(+). Functionally, involved in chemotaxis. Part of a chemotaxis signal transduction system that modulates chemotaxis in response to various stimuli. Catalyzes the demethylation of specific methylglutamate residues introduced into the chemoreceptors (methyl-accepting chemotaxis proteins or MCP) by CheR. Also mediates the irreversible deamidation of specific glutamine residues to glutamic acid. In Chromobacterium violaceum (strain ATCC 12472 / DSM 30191 / JCM 1249 / CCUG 213 / NBRC 12614 / NCIMB 9131 / NCTC 9757 / MK), this protein is Protein-glutamate methylesterase/protein-glutamine glutaminase 1.